A 309-amino-acid chain; its full sequence is N(5)-(carboxyethyl)ornithine synthase (309 aa).

R15, K71, and H92 together coordinate pyruvate. 171-176 (GSGNVA) contacts NADP(+).

The protein belongs to the AlaDH/PNT family. CEOS subfamily. As to quaternary structure, homotetramer.

It catalyses the reaction N(5)-[1(S)-1-carboxyethyl]-L-ornithine + NADP(+) + H2O = L-ornithine + pyruvate + NADPH + H(+). In terms of biological role, catalyzes the NADPH-dependent reductive condensation between pyruvic acid and the side chain amino group of L-ornithine to form N(5)-(L-1-carboxyethyl)-L-ornithine. To a lesser extent, can also use L-lysine as substrate (yielding N(6)-(L-1-carboxyethyl)-L-lysine). The polypeptide is N(5)-(carboxyethyl)ornithine synthase (ceo) (Lactococcus lactis subsp. lactis (strain IL1403) (Streptococcus lactis)).